Reading from the N-terminus, the 387-residue chain is Galanin receptor type 2 (387 aa).

At 1-28 the chain is on the extracellular side; that stretch reads MNVSGCPGAGNASQAGGGGGWHPEAVIV. Residues Asn2 and Asn11 are each glycosylated (N-linked (GlcNAc...) asparagine). Residues 29–49 traverse the membrane as a helical segment; the sequence is PLLFALIFLVGTVGNTLVLAV. The Cytoplasmic segment spans residues 50–60; that stretch reads LLRGGQAVSTT. Residues 61 to 81 form a helical membrane-spanning segment; that stretch reads NLFILNLGVADLCFILCCVPF. Over 82–99 the chain is Extracellular; sequence QATIYTLDGWVFGSLLCK. A disulfide bridge links Cys98 with Cys175. Residues 100 to 121 form a helical membrane-spanning segment; that stretch reads AVHFLIFLTMHASSFTLAAVSL. The Cytoplasmic portion of the chain corresponds to 122–141; the sequence is DRYLAIRYPLHSRELRTPRN. The helical transmembrane segment at 142-162 threads the bilayer; it reads ALAAIGLIWGLSLLFSGPYLS. At 163–187 the chain is on the extracellular side; it reads YYRQSQLANLTVCHPAWSAPRRRAM. A helical membrane pass occupies residues 188–208; that stretch reads DICTFVFSYLLPVLVLGLTYA. Over 209-237 the chain is Cytoplasmic; sequence RTLRYLWRAVDPVAAGSGARRAKRKVTRM. Residues 238 to 258 traverse the membrane as a helical segment; sequence ILIVAALFCLCWMPHHALILC. The Extracellular segment spans residues 259–260; it reads VW. The helical transmembrane segment at 261–281 threads the bilayer; sequence FGQFPLTRATYALRILSHLVS. At 282 to 387 the chain is on the cytoplasmic side; the sequence is YANSCVNPIV…GDSILTVDVA (106 aa).

The protein belongs to the G-protein coupled receptor 1 family. As to expression, expressed abundantly within the central nervous system in both hypothalamus and hippocampus. In peripheral tissues, the strongest expression was observed in heart, kidney, liver, and small intestine.

It localises to the cell membrane. Receptor for the hormone galanin and GALP. Receptor for the hormone spexin-1. The activity of this receptor is mediated by G proteins that activate the phospholipase C/protein kinase C pathway (via G(q)) and that inhibit adenylyl cyclase (via G(i)). The sequence is that of Galanin receptor type 2 (GALR2) from Homo sapiens (Human).